Reading from the N-terminus, the 79-residue chain is MNPKSEVLIAAVLFMLLACVQCQLTFSPDWGKRSVGGAGPGTFFETQQGNCKTSNEMLLEIFRFVQSQAQLFLDCKHRE.

An N-terminal signal peptide occupies residues 1-22 (MNPKSEVLIAAVLFMLLACVQC). Position 23 is a pyrrolidone carboxylic acid (Gln23). A Tryptophan amide modification is found at Trp30. The propeptide occupies 34-79 (SVGGAGPGTFFETQQGNCKTSNEMLLEIFRFVQSQAQLFLDCKHRE).

Belongs to the AKH/HRTH/RPCH family.

It localises to the secreted. Probably causes a marked increase in hemolymph carbohydrate. The chain is Adipokinetic hormone (Akh) from Drosophila melanogaster (Fruit fly).